Reading from the N-terminus, the 248-residue chain is Protein maestro (248 aa).

Residues 1–21 (MDQRQRRILGQPLSIPTSQPK) are disordered. The stretch at 128–163 (SFFIDITLQTRTLLDDENDSLRYSAFVLFGQLAAFA) is one HEAT repeat.

Ubiquitous.

The protein localises to the nucleus. It is found in the nucleolus. This chain is Protein maestro (MRO), found in Homo sapiens (Human).